The chain runs to 271 residues: Formamidopyrimidine-DNA glycosylase (271 aa).

The active-site Schiff-base intermediate with DNA is the Pro-2. The active-site Proton donor is Glu-3. Lys-58 acts as the Proton donor; for beta-elimination activity in catalysis. His-92, Arg-111, and Lys-152 together coordinate DNA. Residues 237-271 form an FPG-type zinc finger; that stretch reads YVYGKVQKPCKICNNTITLIRQNGRSTYFCNACQN. The active-site Proton donor; for delta-elimination activity is the Arg-261.

The protein belongs to the FPG family. As to quaternary structure, monomer. Zn(2+) is required as a cofactor.

The enzyme catalyses Hydrolysis of DNA containing ring-opened 7-methylguanine residues, releasing 2,6-diamino-4-hydroxy-5-(N-methyl)formamidopyrimidine.. It carries out the reaction 2'-deoxyribonucleotide-(2'-deoxyribose 5'-phosphate)-2'-deoxyribonucleotide-DNA = a 3'-end 2'-deoxyribonucleotide-(2,3-dehydro-2,3-deoxyribose 5'-phosphate)-DNA + a 5'-end 5'-phospho-2'-deoxyribonucleoside-DNA + H(+). In terms of biological role, involved in base excision repair of DNA damaged by oxidation or by mutagenic agents. Acts as a DNA glycosylase that recognizes and removes damaged bases. Has a preference for oxidized purines, such as 7,8-dihydro-8-oxoguanine (8-oxoG). Has AP (apurinic/apyrimidinic) lyase activity and introduces nicks in the DNA strand. Cleaves the DNA backbone by beta-delta elimination to generate a single-strand break at the site of the removed base with both 3'- and 5'-phosphates. The sequence is that of Formamidopyrimidine-DNA glycosylase from Wolbachia sp. subsp. Brugia malayi (strain TRS).